We begin with the raw amino-acid sequence, 458 residues long: Exodeoxyribonuclease 7 large subunit (458 aa).

It belongs to the XseA family. In terms of assembly, heterooligomer composed of large and small subunits.

It localises to the cytoplasm. It carries out the reaction Exonucleolytic cleavage in either 5'- to 3'- or 3'- to 5'-direction to yield nucleoside 5'-phosphates.. Its function is as follows. Bidirectionally degrades single-stranded DNA into large acid-insoluble oligonucleotides, which are then degraded further into small acid-soluble oligonucleotides. The polypeptide is Exodeoxyribonuclease 7 large subunit (Escherichia coli O81 (strain ED1a)).